We begin with the raw amino-acid sequence, 443 residues long: Probable D-serine dehydratase (443 aa).

N6-(pyridoxal phosphate)lysine is present on Lys118.

This sequence belongs to the serine/threonine dehydratase family. DsdA subfamily. The cofactor is pyridoxal 5'-phosphate.

The enzyme catalyses D-serine = pyruvate + NH4(+). This chain is Probable D-serine dehydratase, found in Vibrio parahaemolyticus serotype O3:K6 (strain RIMD 2210633).